A 423-amino-acid chain; its full sequence is uncharacterized protein (423 aa).

This sequence belongs to the mycobacterial PPE family.

Functionally, could be required for host endothelial-cell invasion and/or intracellular survival. This is an uncharacterized protein from Mycobacterium tuberculosis (strain CDC 1551 / Oshkosh).